The sequence spans 279 residues: Tryptophan synthase alpha chain (279 aa).

Active-site proton acceptor residues include Glu50 and Asp61.

It belongs to the TrpA family. In terms of assembly, tetramer of two alpha and two beta chains.

The enzyme catalyses (1S,2R)-1-C-(indol-3-yl)glycerol 3-phosphate + L-serine = D-glyceraldehyde 3-phosphate + L-tryptophan + H2O. Its pathway is amino-acid biosynthesis; L-tryptophan biosynthesis; L-tryptophan from chorismate: step 5/5. In terms of biological role, the alpha subunit is responsible for the aldol cleavage of indoleglycerol phosphate to indole and glyceraldehyde 3-phosphate. The chain is Tryptophan synthase alpha chain from Brucella abortus (strain S19).